The following is a 358-amino-acid chain: Cilia- and flagella-associated protein 263 (358 aa).

Coiled-coil stretches lie at residues 93–138 (YKKM…FKRN), 176–200 (RKNS…EMAE), and 266–343 (RTKL…YTKS).

This sequence belongs to the CFAP263 family. As to quaternary structure, forms a complex with CFAP184; the interaction is required for functional activity in cilia. Interacts with HAP1 and PCM1.

It localises to the cytoplasm. Its subcellular location is the cytoskeleton. The protein localises to the microtubule organizing center. It is found in the centrosome. The protein resides in the centriolar satellite. It localises to the cell projection. Its subcellular location is the cilium. Functionally, component of centriolar satellites contributing to primary cilium formation. In complex with CFAP263, acts as a regulator of ciliary beating that connects radial spoke 3 (RS3) to the inner dynein arm (IDA) and the nexin-dynein regulatory complex (N-DRC). The complex is positioned parallel to N-DRC and forms a connection between the arch at the base of RS3, the IDA tail and N-DRC. The chain is Cilia- and flagella-associated protein 263 (cfap263) from Danio rerio (Zebrafish).